Reading from the N-terminus, the 172-residue chain is MDKPFRIYITGKPGIGKTTLLFNIYRILKEKNWRITGFYCPEVRVNNTRMGFKIKSVLSGKEAWLARVDARSGIRIGKYYVVLEDNFVRQLEEEIFSFPDIILIDEIGPMELSSVSLKNLINKILTSNYPVIAVVHRSIKFDDGVIYEVTIQNRDILLEEILGRVTSNKNNI.

ATP-binding positions include 11–18 (GKPGIGKT) and 101–108 (IILIDEIG).

The protein belongs to the THEP1 NTPase family.

It catalyses the reaction a ribonucleoside 5'-triphosphate + H2O = a ribonucleoside 5'-diphosphate + phosphate + H(+). In terms of biological role, has nucleotide phosphatase activity towards ATP, GTP, CTP, TTP and UTP. May hydrolyze nucleoside diphosphates with lower efficiency. The polypeptide is Nucleoside-triphosphatase THEP1 (Sulfolobus acidocaldarius (strain ATCC 33909 / DSM 639 / JCM 8929 / NBRC 15157 / NCIMB 11770)).